The sequence spans 840 residues: Probable alpha-glucuronidase A (840 aa).

The N-terminal stretch at 1-19 (MWSGIPVFALLSSIGIAAA) is a signal peptide. N-linked (GlcNAc...) asparagine glycans are attached at residues N50, N149, N222, N262, N279, N310, N465, N527, N576, N610, N682, N723, and N732.

Belongs to the glycosyl hydrolase 67 family.

The protein resides in the secreted. The catalysed reaction is an alpha-D-glucuronoside + H2O = D-glucuronate + an alcohol. In terms of biological role, alpha-glucuronidase involved in the hydrolysis of xylan, a major structural heterogeneous polysaccharide found in plant biomass representing the second most abundant polysaccharide in the biosphere, after cellulose. Releases 4-O-methylglucuronic acid from xylan. This is Probable alpha-glucuronidase A (aguA) from Neosartorya fischeri (strain ATCC 1020 / DSM 3700 / CBS 544.65 / FGSC A1164 / JCM 1740 / NRRL 181 / WB 181) (Aspergillus fischerianus).